We begin with the raw amino-acid sequence, 443 residues long: 3-phosphoshikimate 1-carboxyvinyltransferase (443 aa).

Positions Met-1 to Pro-25 are disordered. The 3-phosphoshikimate site is built by Lys-28, Ser-29, and Arg-33. Lys-28 is a binding site for phosphoenolpyruvate. Phosphoenolpyruvate-binding residues include Gly-101 and Arg-129. 3-phosphoshikimate contacts are provided by Ser-174, Gln-176, Asp-326, and Lys-353. Gln-176 contacts phosphoenolpyruvate. The active-site Proton acceptor is Asp-326. Phosphoenolpyruvate-binding residues include Arg-357 and Arg-400.

The protein belongs to the EPSP synthase family. As to quaternary structure, monomer.

Its subcellular location is the cytoplasm. It catalyses the reaction 3-phosphoshikimate + phosphoenolpyruvate = 5-O-(1-carboxyvinyl)-3-phosphoshikimate + phosphate. It functions in the pathway metabolic intermediate biosynthesis; chorismate biosynthesis; chorismate from D-erythrose 4-phosphate and phosphoenolpyruvate: step 6/7. Functionally, catalyzes the transfer of the enolpyruvyl moiety of phosphoenolpyruvate (PEP) to the 5-hydroxyl of shikimate-3-phosphate (S3P) to produce enolpyruvyl shikimate-3-phosphate and inorganic phosphate. The protein is 3-phosphoshikimate 1-carboxyvinyltransferase of Paracoccus denitrificans (strain Pd 1222).